The sequence spans 349 residues: Secondary metabolism regulator LAE1 (349 aa).

A disordered region spans residues 1 to 46; sequence MSSRNAPSGCVAPSPATAAPPSPTNLRLTVGQSGSESANEPGGEPE. A compositionally biased stretch (polar residues) spans 25–38; sequence NLRLTVGQSGSESA.

It belongs to the methyltransferase superfamily. LaeA methyltransferase family. As to quaternary structure, component of the heterotrimeric velvet complex composed of LAE1, VEL1 and VEL2; VEL1 acting as a bridging protein between LAE1 and VEL2.

Its subcellular location is the nucleus. It carries out the reaction L-methionyl-[protein] + S-adenosyl-L-methionine = S-methyl-L-methionyl-[protein] + S-adenosyl-L-homocysteine. Methyltransferase that performs automethylation. No other methyl-accepting substrate has been identified yet. Component of the velvet transcription factor complex that acts as a global regulator for secondary metabolite gene expression. Controls the expression of the gamma-pentyl-pyrone gene clusters. Required for the expression of cellulase. Regulates asexual sporulation (conidiation) by environmental stimuli such as light and/or mechanical injury. Required for oxidative stress tolerance. Also plays a role in defense and parasitism on other fungi. The sequence is that of Secondary metabolism regulator LAE1 from Hypocrea atroviridis (strain ATCC 20476 / IMI 206040) (Trichoderma atroviride).